The chain runs to 362 residues: UDP-N-acetylglucosamine--N-acetylmuramyl-(pentapeptide) pyrophosphoryl-undecaprenol N-acetylglucosamine transferase (362 aa).

Residues 15 to 17 (TGG), asparagine 127, arginine 165, serine 191, isoleucine 247, 266 to 271 (ALTVSE), and glutamine 292 each bind UDP-N-acetyl-alpha-D-glucosamine.

The protein belongs to the glycosyltransferase 28 family. MurG subfamily.

The protein localises to the cell inner membrane. The catalysed reaction is di-trans,octa-cis-undecaprenyl diphospho-N-acetyl-alpha-D-muramoyl-L-alanyl-D-glutamyl-meso-2,6-diaminopimeloyl-D-alanyl-D-alanine + UDP-N-acetyl-alpha-D-glucosamine = di-trans,octa-cis-undecaprenyl diphospho-[N-acetyl-alpha-D-glucosaminyl-(1-&gt;4)]-N-acetyl-alpha-D-muramoyl-L-alanyl-D-glutamyl-meso-2,6-diaminopimeloyl-D-alanyl-D-alanine + UDP + H(+). It participates in cell wall biogenesis; peptidoglycan biosynthesis. Its function is as follows. Cell wall formation. Catalyzes the transfer of a GlcNAc subunit on undecaprenyl-pyrophosphoryl-MurNAc-pentapeptide (lipid intermediate I) to form undecaprenyl-pyrophosphoryl-MurNAc-(pentapeptide)GlcNAc (lipid intermediate II). In Shewanella baltica (strain OS155 / ATCC BAA-1091), this protein is UDP-N-acetylglucosamine--N-acetylmuramyl-(pentapeptide) pyrophosphoryl-undecaprenol N-acetylglucosamine transferase.